A 422-amino-acid polypeptide reads, in one-letter code: MALPWIEKYRPKSFAEIVNQEEAKYTLASWICLKFRAPKEFCTRWAKKRDKEVAEAKAILLAGPPGVGKTTLVHALAREIRYELIELNASDVRTADRLRQVIGRGLRESSLFGFEGKMVLFDEVDGLHVKEDKGGLEEIIEIIETAKIPIIMTANNPYDPKFRPLRDISLVVNLKRLSEEEVVEVLRRICTSEGAKCEEEALRSIAKSSMGDLRAAINDLQMYLSGGRRILTLDDIKRVGERNPQLSMFEILDRVYKARWFDEARAVSFNPSFDWEQYFIWALESIPVVYKDLEIASTAYDRLSKADVFMGRIKRTQEWELLPYALELALGGVSQIKGKPRLPPFIKYGFPQRLLLLAKSKEARRRRDALVEYLAQNLHASKSVIKSEIIYVLSALSKNNQSIIEKLSKALGINAIDIKSVL.

63 to 70 (GPPGVGKT) contributes to the ATP binding site.

The protein belongs to the activator 1 small subunits family. RfcL subfamily. As to quaternary structure, heteromultimer composed of small subunits (RfcS) and large subunits (RfcL).

In terms of biological role, part of the RFC clamp loader complex which loads the PCNA sliding clamp onto DNA. This is Replication factor C large subunit from Pyrobaculum aerophilum (strain ATCC 51768 / DSM 7523 / JCM 9630 / CIP 104966 / NBRC 100827 / IM2).